We begin with the raw amino-acid sequence, 430 residues long: Phosphoribosylamine--glycine ligase (430 aa).

The ATP-grasp domain maps to 109-316 (KDFMARHGIP…LLDLIEAALN (208 aa)). 135-196 (VRQQGAPIVI…EEYLDGEEAS (62 aa)) is an ATP binding site. The Mg(2+) site is built by Glu286 and Asn288.

The protein belongs to the GARS family. Mg(2+) serves as cofactor. Requires Mn(2+) as cofactor.

It catalyses the reaction 5-phospho-beta-D-ribosylamine + glycine + ATP = N(1)-(5-phospho-beta-D-ribosyl)glycinamide + ADP + phosphate + H(+). It functions in the pathway purine metabolism; IMP biosynthesis via de novo pathway; N(1)-(5-phospho-D-ribosyl)glycinamide from 5-phospho-alpha-D-ribose 1-diphosphate: step 2/2. The chain is Phosphoribosylamine--glycine ligase from Xylella fastidiosa (strain Temecula1 / ATCC 700964).